The sequence spans 388 residues: Methylthioribose-1-phosphate isomerase (388 aa).

Catalysis depends on Asp252, which acts as the Proton donor.

This sequence belongs to the eIF-2B alpha/beta/delta subunits family. MtnA subfamily.

It is found in the cytoplasm. Its subcellular location is the nucleus. The catalysed reaction is 5-(methylsulfanyl)-alpha-D-ribose 1-phosphate = 5-(methylsulfanyl)-D-ribulose 1-phosphate. The protein operates within amino-acid biosynthesis; L-methionine biosynthesis via salvage pathway; L-methionine from S-methyl-5-thio-alpha-D-ribose 1-phosphate: step 1/6. Functionally, catalyzes the interconversion of methylthioribose-1-phosphate (MTR-1-P) into methylthioribulose-1-phosphate (MTRu-1-P). The protein is Methylthioribose-1-phosphate isomerase of Verticillium alfalfae (strain VaMs.102 / ATCC MYA-4576 / FGSC 10136) (Verticillium wilt of alfalfa).